A 453-amino-acid chain; its full sequence is 4,4'-diapolycopene-4,4'-dial dehydrogenase (453 aa).

Positions 1 to 20 (MPDNDSHSLKSLPERQREDL) are enriched in basic and acidic residues. The segment at 1–23 (MPDNDSHSLKSLPERQREDLFSA) is disordered. Residues glutamate 215 and cysteine 249 contribute to the active site.

Belongs to the aldehyde dehydrogenase family.

The enzyme catalyses all-trans-4,4'-diapolycopene-4,4'-dial + 2 A + 2 H2O = all-trans-4,4'-diapolycopene-4,4'-dioate + 2 AH2 + 2 H(+). It functions in the pathway carotenoid biosynthesis. Functionally, involved in the biosynthesis of the major C30 carotenoid 4,4'-diapolycopene-4,4'-dioic acid, which protects B.firmus from peroxidative reactions. Catalyzes the oxidation of 4,4'-diapolycopene-4,4'-dial to yield 4,4'-diapolycopene-4,4'-dioic aci. This chain is 4,4'-diapolycopene-4,4'-dial dehydrogenase, found in Cytobacillus firmus (Bacillus firmus).